Here is a 566-residue protein sequence, read N- to C-terminus: Beta-1,2-xylosyltransferease XAX1 (566 aa).

The tract at residues 1-25 is disordered; the sequence is MTSTAYSRPSKLPGGGNGSDRRLPP. Over 1–43 the chain is Cytoplasmic; it reads MTSTAYSRPSKLPGGGNGSDRRLPPRLMRGLTTKIEPKKLGVG. A helical; Signal-anchor for type II membrane protein transmembrane segment spans residues 44–64; sequence LLAGCCLALLTYVSLAKLFAI. Over 65-566 the chain is Lumenal; that stretch reads YSPVFASTAN…LLQALDRLQQ (502 aa). N74 carries N-linked (GlcNAc...) asparagine glycosylation. Residues 78-180 form a disordered region; it reads LMQNSPPSSP…AAGGDTKIKC (103 aa). A compositionally biased stretch (pro residues) spans 84–94; that stretch reads PSSPETGPIPP. Residues N104, N368, N429, N515, and N549 are each glycosylated (N-linked (GlcNAc...) asparagine).

This sequence belongs to the glycosyltransferase 61 family. In terms of tissue distribution, highly expressed in young panicles.

Its subcellular location is the golgi apparatus membrane. It participates in glycan metabolism. Functionally, glycosyltransferase involved in the xylosylation of xylan, the major hemicellulose (non-cellulosic component) of primary and secondary walls of angiosperms. Possesses beta-1,2-xylosyltransferase activity, transferring xylose from UDP-xylose to the xylan backbone. The protein is Beta-1,2-xylosyltransferease XAX1 of Oryza sativa subsp. japonica (Rice).